The sequence spans 1354 residues: Enhancer of mRNA-decapping protein 4 homolog (1354 aa).

The segment at 18–38 is disordered; the sequence is PLSASSSPPPSVHRSPRCGKA. Ser32 bears the Phosphoserine mark. 2 WD repeats span residues 309 to 348 and 363 to 406; these read EEDS…VRNH and CSLF…CLQT. Residues 552–581 form a disordered region; the sequence is ERSSLNSKRSQTPEDNLLIKEEPESPNSGT. The segment covering 554 to 565 has biased composition (polar residues); it reads SSLNSKRSQTPE. Ser561 carries the post-translational modification Phosphoserine. Position 563 is a phosphothreonine (Thr563). Ser576 carries the post-translational modification Phosphoserine. Position 581 is a phosphothreonine (Thr581). Phosphoserine occurs at positions 759, 762, and 763. The stretch at 765 to 803 forms a coiled coil; sequence SREVQEIMATQDDADAYEAELENLDDDDDDEEEELANSS. The segment covering 788–799 has biased composition (acidic residues); sequence LDDDDDDEEEEL. Disordered regions lie at residues 788–811 and 838–884; these read LDDD…AVDG and NTNN…AGGT. The segment covering 853–884 has biased composition (low complexity); the sequence is NNNTSVGSNSNNNTATTLSTSNTSSSNNAGGT. 3 coiled-coil regions span residues 893 to 936, 969 to 1036, and 1159 to 1188; these read ELNA…HSKQ, NEHK…QAQM, and KHRT…QVQE. Residue Ser1207 is modified to Phosphoserine. Phosphothreonine is present on residues Thr1211 and Thr1317. Tyr1320 carries the post-translational modification Phosphotyrosine.

Belongs to the WD repeat EDC4 family. As to quaternary structure, homodimer. Interacts with Dcp1 and Dcp2. Interacts with Gyf.

Its subcellular location is the cytoplasm. The protein localises to the P-body. Functionally, in the process of mRNA degradation, seems to play a role in mRNA decapping. Required for silencing a subset of endogenous miRNA targets. In Drosophila melanogaster (Fruit fly), this protein is Enhancer of mRNA-decapping protein 4 homolog (Ge-1).